Reading from the N-terminus, the 33-residue chain is Nigrocin-1 (33 aa).

The cysteines at positions 27 and 33 are disulfide-linked.

Belongs to the frog skin active peptide (FSAP) family. Brevinin subfamily. As to expression, expressed by the skin dorsal glands.

It is found in the secreted. Functionally, shows antibacterial activity against both Gram-positive and Gram-negative bacteria and against the fungus C.albicans. Has no hemolytic activity. The protein is Nigrocin-1 of Pelophylax nigromaculatus (Black-spotted frog).